The sequence spans 192 residues: Signal peptidase complex catalytic subunit SEC11C (192 aa).

Topologically, residues 2 to 28 are cytoplasmic; sequence VRAGAVGTHLPASGLDIFGDLRKMNKR. A helical; Signal-anchor for type II membrane protein transmembrane segment spans residues 29–48; the sequence is QLYYQVLNFAMIVSSALMIW. Residues 49 to 192 are Lumenal-facing; it reads KGLIVLTGSE…GAYVLLKRES (144 aa). Active-site charge relay system residues include Ser-68, His-108, and Asp-134. The tract at residues 177 to 188 is C-terminal short (CTS) helix; that stretch reads ALLAVMGAYVLL.

It belongs to the peptidase S26B family. In terms of assembly, component of the signal peptidase complex paralog C (SPC-C) composed of a catalytic subunit SEC11C and three accessory subunits SPCS1, SPCS2 and SPCS3. Within the complex, interacts with SPCS2 and SPCS3. The complex induces a local thinning of the ER membrane which is used to measure the length of the signal peptide (SP) h-region of protein substrates. This ensures the selectivity of the complex towards h-regions shorter than 18-20 amino acids. May undergo processing at the N-terminus.

The protein resides in the endoplasmic reticulum membrane. It catalyses the reaction Cleavage of hydrophobic, N-terminal signal or leader sequences from secreted and periplasmic proteins.. Catalytic component of the signal peptidase complex (SPC) which catalyzes the cleavage of N-terminal signal sequences from nascent proteins as they are translocated into the lumen of the endoplasmic reticulum. Specifically cleaves N-terminal signal peptides that contain a hydrophobic alpha-helix (h-region) shorter than 18-20 amino acids. This is Signal peptidase complex catalytic subunit SEC11C (SEC11C) from Canis lupus familiaris (Dog).